The sequence spans 347 residues: Protein RecA (347 aa).

67-74 (GPESSGKT) is a binding site for ATP. Positions 327-347 (ALGLSSPTPKENGKEKGKAKP) are disordered. Residues 337–347 (ENGKEKGKAKP) show a composition bias toward basic and acidic residues.

This sequence belongs to the RecA family.

Its subcellular location is the cytoplasm. Can catalyze the hydrolysis of ATP in the presence of single-stranded DNA, the ATP-dependent uptake of single-stranded DNA by duplex DNA, and the ATP-dependent hybridization of homologous single-stranded DNAs. It interacts with LexA causing its activation and leading to its autocatalytic cleavage. The protein is Protein RecA of Desulforapulum autotrophicum (strain ATCC 43914 / DSM 3382 / VKM B-1955 / HRM2) (Desulfobacterium autotrophicum).